A 523-amino-acid polypeptide reads, in one-letter code: Cyclin-dependent kinase 17 (523 aa).

Ser9 bears the Phosphoserine mark. Positions 30–55 are disordered; sequence TIEESSSKDNEPIVKNGRPPTSHSVH. A phosphoserine mark is found at Ser80, Ser92, and Ser105. The interval 103-123 is disordered; that stretch reads MGSDGESDQASGTSSDEVQSP. A compositionally biased stretch (polar residues) spans 110–123; that stretch reads DQASGTSSDEVQSP. Residues Ser137, Ser146, Ser165, and Ser180 each carry the phosphoserine modification. The Protein kinase domain occupies 192 to 473; that stretch reads YIKLEKLGEG…AEEAMKHVYF (282 aa). Residues 198-206 and Lys221 each bind ATP; that span reads LGEGTYATV. Residue Asp313 is the Proton acceptor of the active site. Residues 501-523 form a disordered region; the sequence is PGFRNSSYPETGHGKNRRQSMLF. Over residues 514–523 the composition is skewed to basic residues; the sequence is GKNRRQSMLF.

The protein belongs to the protein kinase superfamily. CMGC Ser/Thr protein kinase family. CDC2/CDKX subfamily. As to quaternary structure, found in a complex containing CABLES1, CDK16 and TDRD7. Interacts with TDRD7.

The enzyme catalyses L-seryl-[protein] + ATP = O-phospho-L-seryl-[protein] + ADP + H(+). It catalyses the reaction L-threonyl-[protein] + ATP = O-phospho-L-threonyl-[protein] + ADP + H(+). Its function is as follows. May play a role in terminally differentiated neurons. Has a Ser/Thr-phosphorylating activity for histone H1. The polypeptide is Cyclin-dependent kinase 17 (Cdk17) (Mus musculus (Mouse)).